A 156-amino-acid chain; its full sequence is 6,7-dimethyl-8-ribityllumazine synthase (156 aa).

Residues phenylalanine 22, 57-59, and 81-83 each bind 5-amino-6-(D-ribitylamino)uracil; these read AYE and TVI. 86–87 is a binding site for (2S)-2-hydroxy-3-oxobutyl phosphate; that stretch reads GT. Histidine 89 serves as the catalytic Proton donor. Phenylalanine 114 contacts 5-amino-6-(D-ribitylamino)uracil. Arginine 128 is a binding site for (2S)-2-hydroxy-3-oxobutyl phosphate.

It belongs to the DMRL synthase family. In terms of assembly, forms an icosahedral capsid composed of 60 subunits, arranged as a dodecamer of pentamers.

It catalyses the reaction (2S)-2-hydroxy-3-oxobutyl phosphate + 5-amino-6-(D-ribitylamino)uracil = 6,7-dimethyl-8-(1-D-ribityl)lumazine + phosphate + 2 H2O + H(+). The protein operates within cofactor biosynthesis; riboflavin biosynthesis; riboflavin from 2-hydroxy-3-oxobutyl phosphate and 5-amino-6-(D-ribitylamino)uracil: step 1/2. Functionally, catalyzes the formation of 6,7-dimethyl-8-ribityllumazine by condensation of 5-amino-6-(D-ribitylamino)uracil with 3,4-dihydroxy-2-butanone 4-phosphate. This is the penultimate step in the biosynthesis of riboflavin. In Yersinia pseudotuberculosis serotype O:1b (strain IP 31758), this protein is 6,7-dimethyl-8-ribityllumazine synthase.